We begin with the raw amino-acid sequence, 950 residues long: Protocadherin alpha-6 (950 aa).

An N-terminal signal peptide occupies residues 1–29 (MVFTPEDRLGKQCLLLPLLLLAAWKVGSG). The Extracellular segment spans residues 30–697 (QLHYSVPEEA…GPEAALVDVN (668 aa)). 6 Cadherin domains span residues 34 to 133 (SVPE…PPLF), 157 to 242 (ASDA…APTF), 243 to 350 (EQSE…VPEI), 351 to 455 (ALTS…APAF), 456 to 565 (AQPE…APAL), and 581 to 678 (VPRS…APKA). N257, N265, N386, and N548 each carry an N-linked (GlcNAc...) asparagine glycan. Residues 698 to 718 (VYLIIAICAVSSLLVLTLLLY) traverse the membrane as a helical segment. Residues 719 to 950 (TALRCSAPPT…GNSTTDNSDQ (232 aa)) lie on the Cytoplasmic side of the membrane. PXXP repeat units lie at residues 799–802 (PRQP), 832–835 (PGGP), 873–876 (PGNP), and 891–894 (PGSP). The interval 799-894 (PRQPNPDWRY…PDKFIIPGSP (96 aa)) is 4 X 4 AA repeats of P-X-X-P. The disordered stretch occupies residues 830-950 (AGPGGPDQQW…GNSTTDNSDQ (121 aa)). The span at 909–923 (DKSDFITFGKKEETK) shows a compositional bias: basic and acidic residues.

Its subcellular location is the cell membrane. It localises to the secreted. Its function is as follows. Potential calcium-dependent cell-adhesion protein. May be involved in the establishment and maintenance of specific neuronal connections in the brain. The chain is Protocadherin alpha-6 (PCDHA6) from Homo sapiens (Human).